Here is a 67-residue protein sequence, read N- to C-terminus: Small ribosomal subunit protein eS27 (67 aa).

Residues Cys22, Cys25, Cys41, and Cys44 each contribute to the Zn(2+) site. The C4-type zinc-finger motif lies at 22–44 (CPDCGNEQITFSHAAMVVRCLVC).

Belongs to the eukaryotic ribosomal protein eS27 family. In terms of assembly, part of the 30S ribosomal subunit. Requires Zn(2+) as cofactor.

The sequence is that of Small ribosomal subunit protein eS27 from Pyrobaculum aerophilum (strain ATCC 51768 / DSM 7523 / JCM 9630 / CIP 104966 / NBRC 100827 / IM2).